The chain runs to 241 residues: Uridylate kinase (241 aa).

ATP is bound at residue 15–18 (KLSG). The interval 23-28 (GSEGFG) is involved in allosteric activation by GTP. Position 57 (G57) interacts with UMP. Residues G58 and R62 each coordinate ATP. UMP is bound by residues D77 and 138–145 (TGNPFFTT). 3 residues coordinate ATP: T165, F171, and D174.

Belongs to the UMP kinase family. Homohexamer.

Its subcellular location is the cytoplasm. It catalyses the reaction UMP + ATP = UDP + ADP. The protein operates within pyrimidine metabolism; CTP biosynthesis via de novo pathway; UDP from UMP (UMPK route): step 1/1. Allosterically activated by GTP. Inhibited by UTP. Functionally, catalyzes the reversible phosphorylation of UMP to UDP. The sequence is that of Uridylate kinase from Vibrio vulnificus (strain CMCP6).